The following is a 663-amino-acid chain: uncharacterized protein (663 aa).

An N-terminal signal peptide occupies residues 1–29 (MLDIGVIGRLKFATAFMAMSLLLVPAAEA).

The protein belongs to the bacterial solute-binding protein 5 family.

The protein resides in the periplasm. Its function is as follows. Possible binding-protein with either a transport or enzymatic activity. This is an uncharacterized protein from Sinorhizobium fredii (strain NBRC 101917 / NGR234).